Here is a 698-residue protein sequence, read N- to C-terminus: Protein let-99 (698 aa).

Positions 23 to 107 (FRSNLSLKTN…SESRIYLFMK (85 aa)) constitute a DEP domain. Disordered regions lie at residues 115 to 188 (PKPR…DDEI) and 653 to 672 (ITRSRNDWQPPVPDKPQASP). Positions 146–157 (RPPKARLPRRLS) are enriched in basic residues. The segment covering 178–188 (HGFDDHKDDEI) has biased composition (basic and acidic residues).

It is found in the cytoplasm. The protein localises to the cell cortex. In terms of biological role, required for the proper orientation of spindles after the establishment of polarity. May play a role in interactions between the astral microtubules and the cortical cytoskeleton. Required for asymmetric forces on nuclei and spindles. Acts downstream of the PAR signaling as an intermediate that transduces polarity information to the machinery that positions the mitotic spindle, possibly by regulating force generation. Regulates gpr-1/2 asymmetric cortical localization during the first embryonic cell divisions. Acts antagonistically to the gpr-1/2 signaling pathway. Regulates mes-1 expression and/or localization pattern during early embryogenesis. In Caenorhabditis elegans, this protein is Protein let-99 (let-99).